We begin with the raw amino-acid sequence, 322 residues long: Putative MgpC-like protein MPN_367 (322 aa).

Positions 1–48 (MVGSGAAGSASSLQGNGSNSSGLKSLLRSAPVSVPPSSTSNQTLSLSN) are enriched in low complexity. 2 disordered regions span residues 1–59 (MVGS…AVVS) and 118–145 (DATSTNLPHAAGASQTGLGTGSPREPAL). Over residues 120-134 (TSTNLPHAAGASQTG) the composition is skewed to polar residues.

Belongs to the MgpC family.

This is Putative MgpC-like protein MPN_367 from Mycoplasma pneumoniae (strain ATCC 29342 / M129 / Subtype 1) (Mycoplasmoides pneumoniae).